The primary structure comprises 229 residues: Large ribosomal subunit protein uL1 (229 aa).

It belongs to the universal ribosomal protein uL1 family. In terms of assembly, part of the 50S ribosomal subunit.

Its function is as follows. Binds directly to 23S rRNA. The L1 stalk is quite mobile in the ribosome, and is involved in E site tRNA release. Functionally, protein L1 is also a translational repressor protein, it controls the translation of the L11 operon by binding to its mRNA. The chain is Large ribosomal subunit protein uL1 from Lactiplantibacillus plantarum (strain ATCC BAA-793 / NCIMB 8826 / WCFS1) (Lactobacillus plantarum).